The sequence spans 86 residues: Small ribosomal subunit protein bS16 (86 aa).

The protein belongs to the bacterial ribosomal protein bS16 family.

The chain is Small ribosomal subunit protein bS16 from Xanthomonas campestris pv. campestris (strain 8004).